A 1755-amino-acid chain; its full sequence is Transposon Ty1-ER2 Gag-Pol polyprotein (1755 aa).

Composition is skewed to polar residues over residues 1–10 (MESQQLSNYP), 48–60 (TKANSQQTTTPAS), and 127–152 (QSQFPQYPSSVGTPLSTPSPESGNTF). Disordered stretches follow at residues 1–93 (MESQ…MMTQ), 126–173 (PQSQ…RPPP), and 352–421 (GSRN…SKST). Low complexity predominate over residues 153-165 (TDSSSADSDMTST). The interval 299 to 401 (NNGIHINNKV…NSKSKTARAH (103 aa)) is RNA-binding. The span at 402–418 (NVSTSNNSPSTDNDSIS) shows a compositional bias: low complexity. Residue D461 is the For protease activity; shared with dimeric partner of the active site. Positions 583 to 640 (NVHTSESTRKYPYPFIHRMLAHANAQTIRYSLKNNTITYFNESDVDWSSAIDYQCPDC) are integrase-type zinc finger-like. Residues 660–835 (NSYEPFQYLH…AGLDISTLLP (176 aa)) enclose the Integrase catalytic domain. Residues D671 and D736 each contribute to the Mg(2+) site. The segment at 958-1170 (AVSPTDSTPP…SSLGGIGDSN (213 aa)) is disordered. Positions 960–969 (SPTDSTPPST) are enriched in low complexity. Polar residues predominate over residues 1005–1015 (STPQISDIEST). Residues 1038–1053 (ESSHASKSKDFRHSDS) show a composition bias toward basic and acidic residues. 2 stretches are compositionally biased toward polar residues: residues 1054-1082 (YSDNETNHTNVPISSTGGTNNKTVPQTSE) and 1095-1106 (SIDTSSSESNSL). A Bipartite nuclear localization signal motif is present at residues 1178 to 1212 (KKRSLEDNETEIKVSRDTWNTKNMRSLEPPRSKKR). The Reverse transcriptase Ty1/copia-type domain maps to 1338-1476 (NNYYITQLDI…DILGLEIKYQ (139 aa)). Mg(2+) is bound by residues D1346, D1427, D1428, D1610, E1652, and D1685. The RNase H Ty1/copia-type domain maps to 1610-1752 (DASYGNQPYY…IKTFKLLTNK (143 aa)).

As to quaternary structure, the capsid protein forms a homotrimer, from which the VLPs are assembled. The protease is a homodimer, whose active site consists of two apposed aspartic acid residues. Initially, virus-like particles (VLPs) are composed of the structural unprocessed proteins Gag and Gag-Pol, and also contain the host initiator methionine tRNA (tRNA(i)-Met) which serves as a primer for minus-strand DNA synthesis, and a dimer of genomic Ty RNA. Processing of the polyproteins occurs within the particle and proceeds by an ordered pathway, called maturation. First, the protease (PR) is released by autocatalytic cleavage of the Gag-Pol polyprotein yielding capsid protein p45 and a Pol-p154 precursor protein. This cleavage is a prerequisite for subsequent processing of Pol-p154 at the remaining sites to release the mature structural and catalytic proteins. Maturation takes place prior to the RT reaction and is required to produce transposition-competent VLPs.

Its subcellular location is the cytoplasm. It localises to the nucleus. The enzyme catalyses DNA(n) + a 2'-deoxyribonucleoside 5'-triphosphate = DNA(n+1) + diphosphate. The catalysed reaction is Endonucleolytic cleavage to 5'-phosphomonoester.. Functionally, capsid protein (CA) is the structural component of the virus-like particle (VLP), forming the shell that encapsulates the retrotransposons dimeric RNA genome. The particles are assembled from trimer-clustered units and there are holes in the capsid shells that allow for the diffusion of macromolecules. CA also has nucleocapsid-like chaperone activity, promoting primer tRNA(i)-Met annealing to the multipartite primer-binding site (PBS), dimerization of Ty1 RNA and initiation of reverse transcription. The aspartyl protease (PR) mediates the proteolytic cleavages of the Gag and Gag-Pol polyproteins after assembly of the VLP. Its function is as follows. Reverse transcriptase/ribonuclease H (RT) is a multifunctional enzyme that catalyzes the conversion of the retro-elements RNA genome into dsDNA within the VLP. The enzyme displays a DNA polymerase activity that can copy either DNA or RNA templates, and a ribonuclease H (RNase H) activity that cleaves the RNA strand of RNA-DNA heteroduplexes during plus-strand synthesis and hydrolyzes RNA primers. The conversion leads to a linear dsDNA copy of the retrotransposon that includes long terminal repeats (LTRs) at both ends. In terms of biological role, integrase (IN) targets the VLP to the nucleus, where a subparticle preintegration complex (PIC) containing at least integrase and the newly synthesized dsDNA copy of the retrotransposon must transit the nuclear membrane. Once in the nucleus, integrase performs the integration of the dsDNA into the host genome. In Saccharomyces cerevisiae (strain ATCC 204508 / S288c) (Baker's yeast), this protein is Transposon Ty1-ER2 Gag-Pol polyprotein (TY1B-ER2).